Here is a 139-residue protein sequence, read N- to C-terminus: S-adenosylmethionine decarboxylase proenzyme (139 aa).

The Schiff-base intermediate with substrate; via pyruvic acid role is filled by Ser-63. Ser-63 carries the post-translational modification Pyruvic acid (Ser); by autocatalysis. The active-site Proton acceptor; for processing activity is the His-68. The Proton donor; for catalytic activity role is filled by Cys-83.

Belongs to the prokaryotic AdoMetDC family. Type 1 subfamily. In terms of assembly, heterotetramer of two alpha and two beta chains arranged as a dimer of alpha/beta heterodimers. The cofactor is pyruvate. In terms of processing, is synthesized initially as an inactive proenzyme. Formation of the active enzyme involves a self-maturation process in which the active site pyruvoyl group is generated from an internal serine residue via an autocatalytic post-translational modification. Two non-identical subunits are generated from the proenzyme in this reaction, and the pyruvate is formed at the N-terminus of the alpha chain, which is derived from the carboxyl end of the proenzyme. The post-translation cleavage follows an unusual pathway, termed non-hydrolytic serinolysis, in which the side chain hydroxyl group of the serine supplies its oxygen atom to form the C-terminus of the beta chain, while the remainder of the serine residue undergoes an oxidative deamination to produce ammonia and the pyruvoyl group blocking the N-terminus of the alpha chain.

It catalyses the reaction S-adenosyl-L-methionine + H(+) = S-adenosyl 3-(methylsulfanyl)propylamine + CO2. The protein operates within amine and polyamine biosynthesis; S-adenosylmethioninamine biosynthesis; S-adenosylmethioninamine from S-adenosyl-L-methionine: step 1/1. Catalyzes the decarboxylation of S-adenosylmethionine to S-adenosylmethioninamine (dcAdoMet), the propylamine donor required for the synthesis of the polyamines spermine and spermidine from the diamine putrescine. The polypeptide is S-adenosylmethionine decarboxylase proenzyme (Pyrococcus abyssi (strain GE5 / Orsay)).